Consider the following 37-residue polypeptide: Large ribosomal subunit protein bL36A (37 aa).

Belongs to the bacterial ribosomal protein bL36 family.

In Neisseria meningitidis serogroup C (strain 053442), this protein is Large ribosomal subunit protein bL36A.